The sequence spans 570 residues: Proline--tRNA ligase (570 aa).

The protein belongs to the class-II aminoacyl-tRNA synthetase family. ProS type 1 subfamily. Homodimer.

It localises to the cytoplasm. It catalyses the reaction tRNA(Pro) + L-proline + ATP = L-prolyl-tRNA(Pro) + AMP + diphosphate. Its function is as follows. Catalyzes the attachment of proline to tRNA(Pro) in a two-step reaction: proline is first activated by ATP to form Pro-AMP and then transferred to the acceptor end of tRNA(Pro). As ProRS can inadvertently accommodate and process non-cognate amino acids such as alanine and cysteine, to avoid such errors it has two additional distinct editing activities against alanine. One activity is designated as 'pretransfer' editing and involves the tRNA(Pro)-independent hydrolysis of activated Ala-AMP. The other activity is designated 'posttransfer' editing and involves deacylation of mischarged Ala-tRNA(Pro). The misacylated Cys-tRNA(Pro) is not edited by ProRS. The polypeptide is Proline--tRNA ligase (Clostridium tetani (strain Massachusetts / E88)).